A 286-amino-acid polypeptide reads, in one-letter code: Spermidine/putrescine transport system permease protein PotB (286 aa).

The Cytoplasmic portion of the chain corresponds to 1–13; that stretch reads MKIINNKFQKITV. A helical membrane pass occupies residues 14-33; the sequence is AIIFSWLIFFVLIPNLLVLA. Over 34 to 71 the chain is Periplasmic; that stretch reads VSFLTRDGSNFYAFPITIENYTNLFNPLYAQVVWNSLS. Positions 66 to 274 constitute an ABC transmembrane type-1 domain; sequence VWNSLSMSGI…MALLIFVYYR (209 aa). The chain crosses the membrane as a helical span at residues 72-91; sequence MSGIATIICLLIGYPFAFMM. Residues 92–100 are Cytoplasmic-facing; the sequence is SKIHPKYRP. A helical membrane pass occupies residues 101–120; the sequence is LLLFLVVLPFWTNSLIRIYG. The Periplasmic segment spans residues 121–151; the sequence is MKVFLGVKGILNTMLIDMGILSAPIRILNTE. Residues 152-171 form a helical membrane-spanning segment; the sequence is IAVIIGLVYLLLPFMILPLY. Residues 172-199 lie on the Cytoplasmic side of the membrane; the sequence is SAIEKLDNRLLEAARDLGANTFQRFFRV. Residues 200 to 219 traverse the membrane as a helical segment; the sequence is ILPLTMPGIIAGCLLVLLPA. The Periplasmic portion of the chain corresponds to 220 to 252; the sequence is MGMFYVADLLGGAKVLLVGNVIKSEFLISRNWP. Residues 253–272 form a helical membrane-spanning segment; the sequence is FGSAVSIGLTVLMALLIFVY. Residues 273-286 lie on the Cytoplasmic side of the membrane; it reads YRANKLLNRKVELE.

Belongs to the binding-protein-dependent transport system permease family. CysTW subfamily.

It localises to the cell inner membrane. Required for the activity of the bacterial periplasmic transport system of putrescine and spermidine. The polypeptide is Spermidine/putrescine transport system permease protein PotB (potB) (Haemophilus influenzae (strain ATCC 51907 / DSM 11121 / KW20 / Rd)).